Consider the following 188-residue polypeptide: GTP cyclohydrolase 1 (188 aa).

Cysteine 76, histidine 79, and cysteine 148 together coordinate Zn(2+).

It belongs to the GTP cyclohydrolase I family. Homomer.

The catalysed reaction is GTP + H2O = 7,8-dihydroneopterin 3'-triphosphate + formate + H(+). Its pathway is cofactor biosynthesis; 7,8-dihydroneopterin triphosphate biosynthesis; 7,8-dihydroneopterin triphosphate from GTP: step 1/1. This Thermoanaerobacter pseudethanolicus (strain ATCC 33223 / 39E) (Clostridium thermohydrosulfuricum) protein is GTP cyclohydrolase 1.